The following is a 340-amino-acid chain: Glyceraldehyde-3-phosphate dehydrogenase (340 aa).

Residues T11–I12 and G109 each bind NAD(+). The cysteines at positions 123 and 149 are disulfide-linked. S138–N140 lines the D-glyceraldehyde 3-phosphate pocket. The active-site Nucleophile is C139. Residue R167 participates in NAD(+) binding. Residue H193–A194 coordinates D-glyceraldehyde 3-phosphate. Q300 contributes to the NAD(+) binding site.

Belongs to the glyceraldehyde-3-phosphate dehydrogenase family. As to quaternary structure, homotetramer.

The protein resides in the cytoplasm. It carries out the reaction D-glyceraldehyde 3-phosphate + phosphate + NADP(+) = (2R)-3-phospho-glyceroyl phosphate + NADPH + H(+). The enzyme catalyses D-glyceraldehyde 3-phosphate + phosphate + NAD(+) = (2R)-3-phospho-glyceroyl phosphate + NADH + H(+). It participates in carbohydrate degradation; glycolysis; pyruvate from D-glyceraldehyde 3-phosphate: step 1/5. Its function is as follows. Can use both NAD and NADP as cofactors, but exhibits a marked preference for NADP. The sequence is that of Glyceraldehyde-3-phosphate dehydrogenase (gap) from Saccharolobus solfataricus (strain ATCC 35092 / DSM 1617 / JCM 11322 / P2) (Sulfolobus solfataricus).